The sequence spans 316 residues: Putative ubiquitin-conjugating enzyme E2 39 (316 aa).

Residues 57–217 (NWVKDIQKEW…VFVFSLKTMH (161 aa)) enclose the UBC core domain. Residue Cys-143 is the Glycyl thioester intermediate of the active site.

Belongs to the ubiquitin-conjugating enzyme family.

The catalysed reaction is S-ubiquitinyl-[E1 ubiquitin-activating enzyme]-L-cysteine + [E2 ubiquitin-conjugating enzyme]-L-cysteine = [E1 ubiquitin-activating enzyme]-L-cysteine + S-ubiquitinyl-[E2 ubiquitin-conjugating enzyme]-L-cysteine.. It participates in protein modification; protein ubiquitination. In terms of biological role, accepts the ubiquitin from the E1 complex and catalyzes its covalent attachment to other proteins. This Arabidopsis thaliana (Mouse-ear cress) protein is Putative ubiquitin-conjugating enzyme E2 39 (UBC39).